Reading from the N-terminus, the 633-residue chain is GTPase-activating protein GYP3 (633 aa).

Positions 26–127 are disordered; it reads AFTVKSPSVP…HSDDLDLVPD (102 aa). Positions 37–47 are enriched in basic and acidic residues; that stretch reads FHDKMHSDHSS. Acidic residues predominate over residues 99–115; the sequence is GEDDDDNNGDNGNEDLE. A Phosphoserine modification is found at S147. The Rab-GAP TBC domain occupies 223-456; sequence GIPAEWRGNA…RIWDCLFYEE (234 aa). Phosphoserine is present on S484.

It is found in the cytoplasm. It localises to the bud. The protein resides in the bud neck. Regulates exocytosis by functioning as a GAP for SEC4. Stimulates specifically the GTPase activity of YPT6. Also required for efficient polarization of the actin patches. The polypeptide is GTPase-activating protein GYP3 (MSB3) (Saccharomyces cerevisiae (strain ATCC 204508 / S288c) (Baker's yeast)).